A 66-amino-acid polypeptide reads, in one-letter code: Sec-independent protein translocase protein TatA (66 aa).

Residues 1 to 21 (MSIGIWQIAIVVILVVLLFGR) form a helical membrane-spanning segment. The interval 43–66 (ATDITDEPEPKNVSENNQDSKDKE) is disordered. A compositionally biased stretch (basic and acidic residues) spans 50–66 (PEPKNVSENNQDSKDKE).

This sequence belongs to the TatA/E family. The Tat system comprises two distinct complexes: a TatABC complex, containing multiple copies of TatA, TatB and TatC subunits, and a separate TatA complex, containing only TatA subunits. Substrates initially bind to the TatABC complex, which probably triggers association of the separate TatA complex to form the active translocon.

The protein localises to the cell inner membrane. Part of the twin-arginine translocation (Tat) system that transports large folded proteins containing a characteristic twin-arginine motif in their signal peptide across membranes. TatA could form the protein-conducting channel of the Tat system. The chain is Sec-independent protein translocase protein TatA from Pelagibacter ubique (strain HTCC1062).